The sequence spans 1992 residues: Otoferlin (1992 aa).

C2 domains are found at residues 1–98, 241–362, and 405–536; these read MALV…EVSD, KRSK…HKWA, and IEGN…FLPT. The Cytoplasmic segment spans residues 1–1958; the sequence is MALVVHLKTV…IRYFIWHNYR (1958 aa). Residues 655–699 are disordered; sequence PALAKKKKEGGGESEEEESELIHNSSEEEAEDDGDLTSVPSTPPM. C2 domains lie at 952–1077 and 1124–1250; these read IQAV…PPRF and RGPI…NNWA. Positions 984, 990, 1046, and 1048 each coordinate Ca(2+). Positions 1282–1363 form a coiled coil; sequence VKVDLNEDEK…ESAEIKADDF (82 aa). 2 disordered regions span residues 1288–1311 and 1354–1399; these read EDEK…EEEP and ESAE…KPKV. A compositionally biased stretch (basic and acidic residues) spans 1356 to 1399; it reads AEIKADDFPMKGTKPKEKSKDKKSTKDKKKNNDGTEKRPPKPKV. C2 domains lie at 1470-1588 and 1711-1860; these read DPNM…ATCG and PAPG…KQCS. D1503, D1509, D1558, D1560, D1566, D1831, S1834, and D1837 together coordinate Ca(2+). A helical membrane pass occupies residues 1959 to 1979; sequence WLILKALALLLLLLLVGLFLY. Residues 1980–1992 are Extracellular-facing; that stretch reads SIPGYLVKKLLGA.

This sequence belongs to the ferlin family. Ca(2+) is required as a cofactor.

The protein localises to the cytoplasmic vesicle. It localises to the secretory vesicle. The protein resides in the synaptic vesicle membrane. It is found in the basolateral cell membrane. Its subcellular location is the endoplasmic reticulum membrane. The protein localises to the golgi apparatus membrane. It localises to the presynaptic cell membrane. The protein resides in the cell membrane. Key calcium ion sensor involved in the Ca(2+)-triggered synaptic vesicle-plasma membrane fusion and in the control of neurotransmitter release at these output synapses. This Danio rerio (Zebrafish) protein is Otoferlin (otof).